The following is a 650-amino-acid chain: Growth hormone receptor (650 aa).

Residues 1 to 24 form the signal peptide; the sequence is MDLCQVFLTLALAVTSSTFSGSEA. Residues 25–273 are Extracellular-facing; it reads TPATLGKASP…ILEACEEDIQ (249 aa). Cystine bridges form between C56/C66 and C109/C120. N123 is a glycosylation site (N-linked (GlcNAc...) asparagine). C134 and C148 form a disulfide bridge. The region spanning 159-262 is the Fibronectin type-III domain; it reads PPIGLNWTLL…EVLRVIFPQT (104 aa). N-linked (GlcNAc...) asparagine glycans are attached at residues N164, N169, and N208. The WSXWS motif signature appears at 248–252; sequence YSEFS. The chain crosses the membrane as a helical span at residues 274–297; the sequence is FPWFLIIIFGIFGVAVMLFVVIFS. At 298 to 650 the chain is on the cytoplasmic side; sequence KQQRIKMLIL…STDQLNKIMQ (353 aa). Residues 303–390 are required for JAK2 binding; the sequence is KMLILPPVPV…HEKSAGILGA (88 aa). Positions 306 to 314 match the Box 1 motif motif; sequence ILPPVPVPK. The short motif at 349–358 is the UbE motif element; sequence DSWVEFIELD. Residue S350 is modified to Phosphoserine. Residues 466 to 486 form a disordered region; the sequence is KPQPLLSSETEATHQLASTPM. Over residues 470-486 the composition is skewed to polar residues; sequence LLSSETEATHQLASTPM. A phosphotyrosine mark is found at Y498 and Y606.

It belongs to the type I cytokine receptor family. Type 1 subfamily. As to quaternary structure, on growth hormone (GH) binding, forms homodimers and binds JAK2 via a box 1-containing domain. In terms of processing, the soluble form (GHBP) is produced by phorbol ester-promoted proteolytic cleavage at the cell surface (shedding) by ADAM17/TACE. Shedding is inhibited by growth hormone (GH) binding to the receptor probably due to a conformational change in GHR rendering the receptor inaccessible to ADAM17. On GH binding, phosphorylated on tyrosine residues in the cytoplasmic domain by JAK2. Post-translationally, ubiquitinated by the ECS(SOCS2) complex following ligand-binding and phosphorylation by JAK2, leading to its degradation by the proteasome. Regulation by the ECS(SOCS2) complex acts as a negative feedback loop of growth hormone receptor signaling. Ubiquitination is not sufficient for GHR internalization. Expressed in all tissues tested including, liver, heart, adipose tissue, mammary gland, testes, ovary, brain, kidney and muscle. Highest levels in liver.

Its subcellular location is the cell membrane. It localises to the secreted. Its function is as follows. Receptor for pituitary gland growth hormone (GH1) involved in regulating postnatal body growth. On ligand binding, couples to the JAK2/STAT5 pathway. The soluble form (GHBP) acts as a reservoir of growth hormone in plasma and may be a modulator/inhibitor of GH signaling. The chain is Growth hormone receptor (Ghr) from Mus musculus (Mouse).